Consider the following 309-residue polypeptide: Dehydrogenase/reductase SDR family member 7B (309 aa).

Residues 1–5 (MERAL) are Cytoplasmic-facing. The helical; Signal-anchor for type II membrane protein transmembrane segment at 6 to 26 (GVGIGPLAAGTVGLLILLKVI) threads the bilayer. Residues 27–271 (QRLRRRPNIQ…LKAVCQKKKD (245 aa)) are Lumenal-facing. NAD(+) contacts are provided by Ser47 and Leu49. Ser179 is a binding site for substrate. NAD(+)-binding residues include Tyr192, Lys196, and Thr227. Tyr192 functions as the Proton acceptor in the catalytic mechanism.

This sequence belongs to the short-chain dehydrogenases/reductases (SDR) family.

It localises to the endoplasmic reticulum membrane. Putative oxidoreductase. The polypeptide is Dehydrogenase/reductase SDR family member 7B (dhrs7b) (Danio rerio (Zebrafish)).